Consider the following 307-residue polypeptide: Aspartate carbamoyltransferase catalytic subunit (307 aa).

R59 and T60 together coordinate carbamoyl phosphate. K87 serves as a coordination point for L-aspartate. R109, H139, and Q142 together coordinate carbamoyl phosphate. Residues R172 and R224 each coordinate L-aspartate. The carbamoyl phosphate site is built by A265 and P266.

It belongs to the aspartate/ornithine carbamoyltransferase superfamily. ATCase family. As to quaternary structure, heterododecamer (2C3:3R2) of six catalytic PyrB chains organized as two trimers (C3), and six regulatory PyrI chains organized as three dimers (R2).

It carries out the reaction carbamoyl phosphate + L-aspartate = N-carbamoyl-L-aspartate + phosphate + H(+). Its pathway is pyrimidine metabolism; UMP biosynthesis via de novo pathway; (S)-dihydroorotate from bicarbonate: step 2/3. In terms of biological role, catalyzes the condensation of carbamoyl phosphate and aspartate to form carbamoyl aspartate and inorganic phosphate, the committed step in the de novo pyrimidine nucleotide biosynthesis pathway. The chain is Aspartate carbamoyltransferase catalytic subunit from Streptococcus agalactiae serotype Ia (strain ATCC 27591 / A909 / CDC SS700).